A 456-amino-acid chain; its full sequence is Equilibrative nucleoside transporter 2 (456 aa).

Over 1-12 (MAHGNAPRDSYH) the chain is Cytoplasmic. The chain crosses the membrane as a helical span at residues 13–29 (LVGISFFILGLGTLLPW). The Extracellular segment spans residues 30-68 (NFFITAIPYFQGRLAGTNSSAETPSTNHTSPTDTFNFNN). Asparagine 47 and asparagine 56 each carry an N-linked (GlcNAc...) asparagine glycan. A helical membrane pass occupies residues 69 to 93 (WVTLLSQLPLLLFTLLNSFLYQCIP). The Cytoplasmic segment spans residues 94–97 (ESVR). Residues 98–116 (ILGSLLAILLLFALTAALV) traverse the membrane as a helical segment. The Extracellular segment spans residues 117 to 124 (KVDLSPGL). A helical membrane pass occupies residues 125-143 (FFSITMASVWFINSFCAVL). Topologically, residues 144–160 (QGSLFGQLGTMPSTYST) are cytoplasmic. The helical transmembrane segment at 161–185 (LFLSGQGLAGIFAALAMLTSLASGV) threads the bilayer. The Extracellular portion of the chain corresponds to 186–192 (DPQTSAL). A helical membrane pass occupies residues 193–213 (GYFITPCVGILLSIICYLSLP). At 214–291 (HLKFARYYLT…VFVVFRKIWL (78 aa)) the chain is on the cytoplasmic side. A Phosphoserine modification is found at serine 251. A helical membrane pass occupies residues 292–311 (TALCLVLVFTVTLSVFPAIT). The Extracellular segment spans residues 312–323 (AMVTTSSNSPGK). A helical transmembrane segment spans residues 324-342 (WSQFFNPICCFLLFNVMDW). The Cytoplasmic portion of the chain corresponds to 343–359 (LGRSLTSYFLWPDEDSQ). A helical membrane pass occupies residues 360–378 (LLPLLVCLRFLFVPLFMLC). Over 379–393 (HVPQRARLPIIFWQD) the chain is Extracellular. A helical transmembrane segment spans residues 394–413 (AYFITFMLLFAISNGYFVSL). The Cytoplasmic segment spans residues 414–431 (TMCLAPRQVLPHEREVAG). A helical membrane pass occupies residues 432–452 (ALMTFFLALGLSCGASLSFLF). Residues 453 to 456 (KALL) are Extracellular-facing.

The protein belongs to the SLC29A/ENT transporter (TC 2.A.57) family. Expressed in squeletal muscles. Expressed in testis at the blood-brain-barrier.

It localises to the apical cell membrane. The protein resides in the basolateral cell membrane. It carries out the reaction uridine(out) = uridine(in). The catalysed reaction is inosine(in) = inosine(out). The enzyme catalyses adenosine(in) = adenosine(out). It catalyses the reaction thymidine(in) = thymidine(out). It carries out the reaction hypoxanthine(out) = hypoxanthine(in). The catalysed reaction is adenine(out) = adenine(in). The enzyme catalyses cytidine(in) = cytidine(out). It catalyses the reaction thymine(out) = thymine(in). It carries out the reaction uracil(in) = uracil(out). The catalysed reaction is guanine(out) = guanine(in). The enzyme catalyses guanosine(in) = guanosine(out). Functionally, bidirectional uniporter involved in the facilitative transport of nucleosides and nucleobases, and contributes to maintaining their cellular homeostasis. Functions as a Na(+)-independent, passive transporter. Involved in the transport of nucleosides such as inosine, adenosine, uridine, thymidine, cytidine and guanosine. Also able to transport purine nucleobases (hypoxanthine, adenine, guanine) and pyrimidine nucleobases (thymine, uracil). Involved in nucleoside transport at basolateral membrane of kidney cells, allowing liver absorption of nucleoside metabolites. Mediates apical nucleoside uptake into Sertoli cells, thereby regulating the transport of nucleosides in testis across the blood-testis-barrier. Mediates both the influx and efflux of hypoxanthine in skeletal muscle microvascular endothelial cells to control the amount of intracellular hypoxanthine available for xanthine oxidase-mediated ROS production. The polypeptide is Equilibrative nucleoside transporter 2 (Rattus norvegicus (Rat)).